The primary structure comprises 260 residues: 3-dehydroquinate dehydratase (260 aa).

3-dehydroquinate is bound by residues 50 to 52 (EWR) and Arg-86. His-148 acts as the Proton donor/acceptor in catalysis. The Schiff-base intermediate with substrate role is filled by Lys-175. 3 residues coordinate 3-dehydroquinate: Arg-217, Ser-236, and Gln-240.

It belongs to the type-I 3-dehydroquinase family. As to quaternary structure, homodimer.

It carries out the reaction 3-dehydroquinate = 3-dehydroshikimate + H2O. It functions in the pathway metabolic intermediate biosynthesis; chorismate biosynthesis; chorismate from D-erythrose 4-phosphate and phosphoenolpyruvate: step 3/7. Its function is as follows. Involved in the third step of the chorismate pathway, which leads to the biosynthesis of aromatic amino acids. Catalyzes the cis-dehydration of 3-dehydroquinate (DHQ) and introduces the first double bond of the aromatic ring to yield 3-dehydroshikimate. In Aromatoleum aromaticum (strain DSM 19018 / LMG 30748 / EbN1) (Azoarcus sp. (strain EbN1)), this protein is 3-dehydroquinate dehydratase.